The following is a 250-amino-acid chain: Small ribosomal subunit protein uS5 (250 aa).

The span at 1–22 shows a compositional bias: polar residues; it reads MNVVETSSEMNSNVEKASTPKQ. Residues 1–40 form a disordered region; that stretch reads MNVVETSSEMNSNVEKASTPKQENNKRFERKSRPSSRQKV. The region spanning 45-108 is the S5 DRBM domain; the sequence is FEEKVVTIRR…KEAKKNLVSV (64 aa).

This sequence belongs to the universal ribosomal protein uS5 family. In terms of assembly, part of the 30S ribosomal subunit. Contacts proteins S4 and S8.

Functionally, with S4 and S12 plays an important role in translational accuracy. In terms of biological role, located at the back of the 30S subunit body where it stabilizes the conformation of the head with respect to the body. This is Small ribosomal subunit protein uS5 from Mycoplasma capricolum subsp. capricolum (strain California kid / ATCC 27343 / NCTC 10154).